A 258-amino-acid chain; its full sequence is Aspartate/glutamate leucyltransferase (258 aa).

This sequence belongs to the R-transferase family. Bpt subfamily.

It localises to the cytoplasm. It catalyses the reaction N-terminal L-glutamyl-[protein] + L-leucyl-tRNA(Leu) = N-terminal L-leucyl-L-glutamyl-[protein] + tRNA(Leu) + H(+). The enzyme catalyses N-terminal L-aspartyl-[protein] + L-leucyl-tRNA(Leu) = N-terminal L-leucyl-L-aspartyl-[protein] + tRNA(Leu) + H(+). Its function is as follows. Functions in the N-end rule pathway of protein degradation where it conjugates Leu from its aminoacyl-tRNA to the N-termini of proteins containing an N-terminal aspartate or glutamate. This Rhizobium etli (strain ATCC 51251 / DSM 11541 / JCM 21823 / NBRC 15573 / CFN 42) protein is Aspartate/glutamate leucyltransferase.